A 540-amino-acid chain; its full sequence is MTAPSTPSASSVVPSGADTSPHVAAIHEKILIVDFGSQVTQLIARRVREEGVYSEIVPFQKAEAAFAEMKPKAVILSGGPASVLDADAPAAPMAILEAGVPVLGICYGEQTLAKQLGGTVEAGHHREFGRATIEITDDCALFDGVWQKGGTYDVWMSHGDRVTKLPDGFRGVAKAPGSPISVIADDKRKFYATQFHLEVVHTPDGAKILRNFVRKVAGLTGDWTMRAFREEAIEKIRAQVGTGKVICGLSGGVDSAVAAVLIHEAIGDQLTCVFVDHGMLRKDEAKTVVDLFRHHYNIPLVHVDASETFLGALSGVTDPEQKRKIIGKLFIDVFDAEAKVVGGADYLAQGTLYPDVIESVSFTGGPSVTIKSHHNVGGLPERMNMKLVEPLRELFKDEVRALGRELGLPEIFVGRHPFPGPGLAIRCPGEITAEKLDILRNADAVYIDQIRKAGLYDAIWQAFAVLLPVKTVGVMGDGRTYEYVVGLRAVTSTDGMTADYYPFDMAFLGATATRIINEVKGVNRVVYDVTSKPPGTIEWE.

The region spanning 29–222 (KILIVDFGSQ…VRKVAGLTGD (194 aa)) is the Glutamine amidotransferase type-1 domain. Cys106 functions as the Nucleophile in the catalytic mechanism. Catalysis depends on residues His196 and Glu198. One can recognise a GMPS ATP-PPase domain in the interval 223 to 415 (WTMRAFREEA…LGLPEIFVGR (193 aa)). 250-256 (SGGVDSA) contributes to the ATP binding site.

As to quaternary structure, homodimer.

The catalysed reaction is XMP + L-glutamine + ATP + H2O = GMP + L-glutamate + AMP + diphosphate + 2 H(+). It functions in the pathway purine metabolism; GMP biosynthesis; GMP from XMP (L-Gln route): step 1/1. Catalyzes the synthesis of GMP from XMP. This Rhodopseudomonas palustris (strain HaA2) protein is GMP synthase [glutamine-hydrolyzing].